The chain runs to 335 residues: Prepilin leader peptidase/N-methyltransferase (335 aa).

A helical transmembrane segment spans residues 13–33 (LFAVFLFVLGLCVGSFLNVVI). Residues cysteine 49, cysteine 52, cysteine 74, and cysteine 77 each contribute to the Zn(2+) site. The next 5 helical transmembrane spans lie at 105–125 (WTYELVPALVLVSLLVPLAFI), 131–151 (ILPLSMTVPGMLAGIALAFPL), 206–226 (LLGVLLFASMQGAVVGILMLL), 258–278 (PGLPLWKRLLLVPVCLLVQPI), and 299–319 (IPFGPWLALAGLELLLLGPWL).

This sequence belongs to the peptidase A24 family. Requires Zn(2+) as cofactor.

The protein resides in the cell inner membrane. The enzyme catalyses Typically cleaves a -Gly-|-Phe- bond to release an N-terminal, basic peptide of 5-8 residues from type IV prepilin, and then N-methylates the new N-terminal amino group, the methyl donor being S-adenosyl-L-methionine.. In terms of biological role, plays an essential role in type IV pili and type II pseudopili formation by proteolytically removing the leader sequence from substrate proteins and subsequently monomethylating the alpha-amino group of the newly exposed N-terminal phenylalanine. The sequence is that of Prepilin leader peptidase/N-methyltransferase (pilD) from Myxococcus xanthus (strain DK1622).